The chain runs to 323 residues: Viral cathepsin (323 aa).

A signal peptide spans 1–18 (MSKFLLYWFVYGVVCSAA). The propeptide at 19–112 (YDILKAPNYF…VVLDRPPGKG (94 aa)) is activation peptide. 3 disulfide bridges follow: Cys-133-Cys-174, Cys-167-Cys-207, and Cys-262-Cys-310. The active site involves Cys-136. Asn-158 carries N-linked (GlcNAc...) asparagine; by host glycosylation. Catalysis depends on residues His-269 and Asn-289.

This sequence belongs to the peptidase C1 family. In terms of processing, synthesized as an inactive proenzyme and activated by proteolytic removal of the inhibitory propeptide.

It catalyses the reaction Endopeptidase of broad specificity, hydrolyzing substrates of both cathepsin L and cathepsin B.. Its function is as follows. Cysteine protease that plays an essential role in host liquefaction to facilitate horizontal transmission of the virus. May participate in the degradation of foreign protein expressed by the baculovirus system. This chain is Viral cathepsin (VCATH), found in Lepidoptera (butterflies and moths).